A 319-amino-acid polypeptide reads, in one-letter code: HTH-type transcriptional regulator YidZ (319 aa).

Residues 8–65 form the HTH lysR-type domain; that stretch reads LDLNLLLCLQLLMQERSVTKAAKRMNVTPSAVSKSLAKLRAWFDDPLFVNSPLGLSPT. The segment at residues 25 to 44 is a DNA-binding region (H-T-H motif); that stretch reads VTKAAKRMNVTPSAVSKSLA.

It belongs to the LysR transcriptional regulatory family.

Functionally, involved in anaerobic NO protection. In Escherichia coli O17:K52:H18 (strain UMN026 / ExPEC), this protein is HTH-type transcriptional regulator YidZ.